Reading from the N-terminus, the 331-residue chain is MLGIWTLLPLVLTSVVRLLSKCVNAQVTDISSKGFELRKIVTTIETQNLEGLHHEGQFCRNPCPPGERKARDCTVNEDEPDCVPCQEGKEYTDKGHFSSKCRRCRLCDEGHGLEVEINCTRTQNTKCRCKPNFFCNSAVCEHCDPCTKCEHGIIEECTLTSNTKCKEEDSRSDLPWLCLLLLLIPPIVYVVIKKACRKHRKENQGPHESTTLNPETAINLSDVDLSKYITTIAGAMTLSQVKDFVRKNGVSEAKIDEIKNDNVQDTAEQKVQLLRNWYQLHGKKDACDTLIKGLKTADLCTLAEKIHAVILKDITSDTENSNFRNEIQSLV.

An N-terminal signal peptide occupies residues 1 to 25; that stretch reads MLGIWTLLPLVLTSVVRLLSKCVNA. The Extracellular portion of the chain corresponds to 26–171; that stretch reads QVTDISSKGF…NTKCKEEDSR (146 aa). TNFR-Cys repeat units lie at residues 47–83, 84–127, and 128–166; these read QNLE…PDCV, PCQE…NTKC, and RCKP…TKCK. Disulfide bonds link Cys-59/Cys-73, Cys-63/Cys-82, Cys-85/Cys-101, Cys-104/Cys-119, Cys-107/Cys-127, Cys-129/Cys-143, Cys-146/Cys-157, and Cys-149/Cys-165. Asn-118 is a glycosylation site (N-linked (GlcNAc...) asparagine). A helical transmembrane segment spans residues 172 to 192; sequence SDLPWLCLLLLLIPPIVYVVI. Residues 193 to 331 are Cytoplasmic-facing; the sequence is KKACRKHRKE…NFRNEIQSLV (139 aa). Cys-196 is lipidated: S-palmitoyl cysteine. The interval 209–313 is interaction with HIPK3; it reads STTLNPETAI…EKIHAVILKD (105 aa). The residue at position 211 (Thr-211) is a Phosphothreonine. Ser-221 carries the post-translational modification Phosphoserine. Residues 226-250 are interaction with CALM; it reads SKYITTIAGAMTLSQVKDFVRKNGV. Residues 226–310 enclose the Death domain; the sequence is SKYITTIAGA…TLAEKIHAVI (85 aa). Phosphothreonine is present on Thr-318.

As to quaternary structure, component of the death-induced signaling complex (DISC) composed of cell surface receptor FAS/CD95, adapter protein FADD and the CASP8 protease; recruitment of CASP8 to the complex is required for processing of CASP8 into the p18 and p10 subunits. Interacts directly (via DED domain) with NOL3 (via CARD domain); inhibits death-inducing signaling complex (DISC) assembly by inhibiting the increase in FAS-FADD binding induced by FAS activation. Binds DAXX. Interacts with HIPK3. Part of a complex containing HIPK3 and FADD. Binds RIPK1 and FAIM2. Interacts with BABAM2 and FEM1B. Interacts with CALM. In the absence of stimulation, interacts with BIRC2, DDX3X and GSK3B. The interaction with BIRC2 and DDX3X is further enhanced upon receptor stimulation and accompanied by DDX3X and BIRC2 cleavage. In terms of processing, palmitoylated. Palmitoylation by ZDHHC7 prevents the lysosomal degradation of FAS regulating its expression at the plasma membrane.

It localises to the cell membrane. Its subcellular location is the membrane raft. Functionally, receptor for TNFSF6/FASLG. The adapter molecule FADD recruits caspase CASP8 to the activated receptor. The resulting death-inducing signaling complex (DISC) performs CASP8 proteolytic activation which initiates the subsequent cascade of caspases (aspartate-specific cysteine proteases) mediating apoptosis. FAS-mediated apoptosis may have a role in the induction of peripheral tolerance, in the antigen-stimulated suicide of mature T-cells, or both. The chain is Tumor necrosis factor receptor superfamily member 6 (FAS) from Macaca fascicularis (Crab-eating macaque).